The sequence spans 159 residues: Ribosomal RNA large subunit methyltransferase H (159 aa).

S-adenosyl-L-methionine contacts are provided by residues Leu76, Gly108, and 127-132; that span reads FSKMTF.

The protein belongs to the RNA methyltransferase RlmH family. In terms of assembly, homodimer.

The protein localises to the cytoplasm. The catalysed reaction is pseudouridine(1915) in 23S rRNA + S-adenosyl-L-methionine = N(3)-methylpseudouridine(1915) in 23S rRNA + S-adenosyl-L-homocysteine + H(+). Specifically methylates the pseudouridine at position 1915 (m3Psi1915) in 23S rRNA. The chain is Ribosomal RNA large subunit methyltransferase H from Clostridium novyi (strain NT).